The primary structure comprises 816 residues: Neuronal PAS domain-containing protein 2 (816 aa).

Residues M1–K10 are compositionally biased toward basic and acidic residues. Residues M1 to R21 are disordered. The segment at M1 to E61 is sufficient for heterodimer formation with BMAL1, E-box binding and for the effect of NADPH. A bHLH domain is found at A9 to H59. Residues N82–T152 enclose the PAS 1 domain. Heme b is bound by residues H119 and H171. The PAS 2 domain occupies F237–G307. In terms of domain architecture, PAC spans S311–A354. Disordered stretches follow at residues L364–T431, I610–S639, Q685–R705, and P742–S816. Low complexity predominate over residues S400–R413. The span at H420–T431 shows a compositional bias: polar residues. Low complexity predominate over residues L623–S639. Low complexity predominate over residues P745–Q759. Residues L780–G789 show a composition bias toward polar residues. Basic residues predominate over residues P806 to S816.

In terms of assembly, component of the circadian clock oscillator which includes the CRY proteins, CLOCK or NPAS2, BMAL1 or BMAL2, CSNK1D and/or CSNK1E, TIMELESS and the PER proteins. Efficient DNA binding requires dimerization with another bHLH protein. Interacts with NCOA3, KAT2B and CREBBP. Forms a heterodimer with BMAL1 and this heterodimerization is required for E-box-dependent transactivation. Interacts with EP300. The cofactor is heme. In terms of tissue distribution, expressed in the retinal ganglion cells (at protein level). Expressed in the hypothalamic suprachiasmatic nuclei (SCN) of the brain. Also found in spinal cord, and to a lesser extent in colon, small intestine and uterus. Exhibits a diurnal variation in its expression in the brain.

Its subcellular location is the nucleus. Its activity is regulated as follows. Carbon monoxide (CO) and the redox state of the cell can modulate the transcriptional activity of the NPAS2-BMAL1 heterodimer. NADH and NADPH enhance the DNA-binding activity of the heterodimer whereas CO binds the heme group in NPAS2 and inhibits the DNA-binding activity of the heterodimer. Transcriptional activator which forms a core component of the circadian clock. The circadian clock, an internal time-keeping system, regulates various physiological processes through the generation of approximately 24 hour circadian rhythms in gene expression, which are translated into rhythms in metabolism and behavior. It is derived from the Latin roots 'circa' (about) and 'diem' (day) and acts as an important regulator of a wide array of physiological functions including metabolism, sleep, body temperature, blood pressure, endocrine, immune, cardiovascular, and renal function. Consists of two major components: the central clock, residing in the suprachiasmatic nucleus (SCN) of the brain, and the peripheral clocks that are present in nearly every tissue and organ system. Both the central and peripheral clocks can be reset by environmental cues, also known as Zeitgebers (German for 'timegivers'). The predominant Zeitgeber for the central clock is light, which is sensed by retina and signals directly to the SCN. The central clock entrains the peripheral clocks through neuronal and hormonal signals, body temperature and feeding-related cues, aligning all clocks with the external light/dark cycle. Circadian rhythms allow an organism to achieve temporal homeostasis with its environment at the molecular level by regulating gene expression to create a peak of protein expression once every 24 hours to control when a particular physiological process is most active with respect to the solar day. Transcription and translation of core clock components (CLOCK, NPAS2, BMAL1, BMAL2, PER1, PER2, PER3, CRY1 and CRY2) plays a critical role in rhythm generation, whereas delays imposed by post-translational modifications (PTMs) are important for determining the period (tau) of the rhythms (tau refers to the period of a rhythm and is the length, in time, of one complete cycle). A diurnal rhythm is synchronized with the day/night cycle, while the ultradian and infradian rhythms have a period shorter and longer than 24 hours, respectively. Disruptions in the circadian rhythms contribute to the pathology of cardiovascular diseases, cancer, metabolic syndromes and aging. A transcription/translation feedback loop (TTFL) forms the core of the molecular circadian clock mechanism. Transcription factors, CLOCK or NPAS2 and BMAL1 or BMAL2, form the positive limb of the feedback loop, act in the form of a heterodimer and activate the transcription of core clock genes and clock-controlled genes (involved in key metabolic processes), harboring E-box elements (5'-CACGTG-3') within their promoters. The core clock genes: PER1/2/3 and CRY1/2 which are transcriptional repressors form the negative limb of the feedback loop and interact with the CLOCK|NPAS2-BMAL1|BMAL2 heterodimer inhibiting its activity and thereby negatively regulating their own expression. This heterodimer also activates nuclear receptors NR1D1/2 and RORA/B/G, which form a second feedback loop and which activate and repress BMAL1 transcription, respectively. The NPAS2-BMAL1 heterodimer positively regulates the expression of MAOA, F7 and LDHA and modulates the circadian rhythm of daytime contrast sensitivity by regulating the rhythmic expression of adenylate cyclase type 1 (ADCY1) in the retina. NPAS2 plays an important role in sleep homeostasis and in maintaining circadian behaviors in normal light/dark and feeding conditions and in the effective synchronization of feeding behavior with scheduled food availability. Regulates the gene transcription of key metabolic pathways in the liver and is involved in DNA damage response by regulating several cell cycle and DNA repair genes. Controls the circadian rhythm of NR0B2 expression by binding rhythmically to its promoter. Mediates the diurnal variation in the expression of GABARA1 receptor in the brain and contributes to the regulation of anxiety-like behaviors and GABAergic neurotransmission in the ventral striatum. This Mus musculus (Mouse) protein is Neuronal PAS domain-containing protein 2 (Npas2).